Reading from the N-terminus, the 366-residue chain is Flagellar P-ring protein (366 aa).

An N-terminal signal peptide occupies residues 1–19; the sequence is MTLIRLLACLLFLPCLAQA.

Belongs to the FlgI family. As to quaternary structure, the basal body constitutes a major portion of the flagellar organelle and consists of four rings (L,P,S, and M) mounted on a central rod.

The protein localises to the periplasm. It localises to the bacterial flagellum basal body. Functionally, assembles around the rod to form the L-ring and probably protects the motor/basal body from shearing forces during rotation. The polypeptide is Flagellar P-ring protein (Ruegeria pomeroyi (strain ATCC 700808 / DSM 15171 / DSS-3) (Silicibacter pomeroyi)).